A 98-amino-acid polypeptide reads, in one-letter code: NADH-ubiquinone oxidoreductase chain 4L (98 aa).

Transmembrane regions (helical) follow at residues 1-21 (MSMVYINIFLAFILSLMGMLV), 29-49 (SLLCLEGMMLSLFVMMSVTIL), and 61-81 (IVLLVFAACEAALGLSLLVMV).

It belongs to the complex I subunit 4L family. Core subunit of respiratory chain NADH dehydrogenase (Complex I) which is composed of 45 different subunits.

The protein localises to the mitochondrion inner membrane. It catalyses the reaction a ubiquinone + NADH + 5 H(+)(in) = a ubiquinol + NAD(+) + 4 H(+)(out). In terms of biological role, core subunit of the mitochondrial membrane respiratory chain NADH dehydrogenase (Complex I) which catalyzes electron transfer from NADH through the respiratory chain, using ubiquinone as an electron acceptor. Part of the enzyme membrane arm which is embedded in the lipid bilayer and involved in proton translocation. This Vulpes vulpes (Red fox) protein is NADH-ubiquinone oxidoreductase chain 4L (MT-ND4L).